A 274-amino-acid polypeptide reads, in one-letter code: Glutamate--cysteine ligase regulatory subunit (274 aa).

Ser59 is modified (phosphoserine). Lys263 carries the N6-acetyllysine modification.

The protein belongs to the aldo/keto reductase family. Glutamate--cysteine ligase light chain subfamily. Heterodimer of a catalytic heavy chain and a regulatory light chain.

It functions in the pathway sulfur metabolism; glutathione biosynthesis; glutathione from L-cysteine and L-glutamate: step 1/2. This Mus musculus (Mouse) protein is Glutamate--cysteine ligase regulatory subunit (Gclm).